Reading from the N-terminus, the 1170-residue chain is Chromosome partition protein Smc (1170 aa).

ATP is bound at residue 32–39 (PNGCGKSN). 3 coiled-coil regions span residues 169-215 (GVSK…AVVA), 245-365 (DRQR…DAAA), and 401-508 (EAAH…TQGK). Residues 520–623 (ALPRLWKKLH…VADDLAQALA (104 aa)) form the SMC hinge domain. 2 coiled-coil regions span residues 664 to 944 (QEIE…KEKL) and 983 to 1020 (ERKV…LQAT).

This sequence belongs to the SMC family. As to quaternary structure, homodimer.

The protein localises to the cytoplasm. Its function is as follows. Required for chromosome condensation and partitioning. This Burkholderia pseudomallei (strain 1710b) protein is Chromosome partition protein Smc.